The chain runs to 193 residues: Ion-translocating oxidoreductase complex subunit A (193 aa).

The next 6 helical transmembrane spans lie at Leu5 to Leu25, Ile39 to Val59, Phe62 to Ala82, Leu102 to Leu122, Ala134 to Ile154, and Ser171 to Val191.

The protein belongs to the NqrDE/RnfAE family. The complex is composed of six subunits: RnfA, RnfB, RnfC, RnfD, RnfE and RnfG.

It is found in the cell inner membrane. Part of a membrane-bound complex that couples electron transfer with translocation of ions across the membrane. The sequence is that of Ion-translocating oxidoreductase complex subunit A from Yersinia enterocolitica serotype O:8 / biotype 1B (strain NCTC 13174 / 8081).